The sequence spans 373 residues: Caspase-4 (373 aa).

Residues 1–59 (MAENKHPDKPLKVLEQLGKEVLTEYLEKLVQSNVLKLKEEDKQKFNNAERSDKRWVFVD) are required for LPS-binding. Residues 1–80 (MAENKHPDKP…MLLQTFFSVD (80 aa)) constitute a propeptide that is removed on maturation. A CARD domain is found at 1–91 (MAENKHPDKP…GSHHGEANLE (91 aa)). Phosphoserine is present on serine 83. Catalysis depends on residues histidine 206 and cysteine 254. Positions 267–285 (SSKPQLCRGVDLPRNMEAD) are excised as a propeptide. Arginine 310 bears the (Microbial infection) ADP-riboxanated arginine mark.

The protein belongs to the peptidase C14A family. In terms of assembly, heterotetramer that consists of two anti-parallel arranged heterodimers, each one formed by a 20 kDa (Caspase-4 subunit p20) and a 10 kDa (Caspase-4 subunit p10) subunit. Upon direct LPS-binding, forms large homooligomers, resulting in its activation. These oligomers are often referred to as 'non-canonical inflammasomes'. In its precursor form, interacts with TMEM214; this interaction is required for association with the endoplasmic reticulum membrane. Interacts with CASP1. Interacts with NOD2. Interacts with Serpinb1a, Serpinb1b and Serpinb1c; these interactions regulate CASP4 activity. As to quaternary structure, heterotetramer that consists of two anti-parallel arranged heterodimers, each one formed by a 20 kDa (Caspase-4 subunit p20) and a 10 kDa (Caspase-4 subunit p10) subunit. In response to activation signals, undergoes autoproteolytic cleavage and activation. In terms of processing, (Microbial infection) ADP-riboxanation by S.flexneri OspC3 blocks CASP4 autoprocessing, preventing CASP4 activation and ability to recognize and cleave GSDMD, thereby thwarting the inflammasome/pyroptosis-mediated defense. In terms of tissue distribution, widely expressed, including in thymus, lung and spleen (at protein level). Very low levels, if any, in the brain.

It is found in the cytoplasm. Its subcellular location is the cytosol. It localises to the endoplasmic reticulum membrane. The protein localises to the mitochondrion. The protein resides in the inflammasome. It is found in the secreted. The enzyme catalyses Strict requirement for Asp at the P1 position and has a preferred cleavage sequence of (Ile/Leu/Val/Phe)-Gly-His-Asp-|-.. Activated by homooligomerization induced by direct binding to cytosolic LPS, in a TLR4-independent manner. In addition to LPS, CASP4/CASP11 may also be activated by oxidized phospholipid 1-palmitoyl-2-arachidonoyl- sn-glycero-3-phosphorylcholine, an oxidized phospholipid (oxPAPC), in dendritic cells, promoting adaptive immunity. The role of oxPAPC is however unclear and another report suggests that oxPAPC competes with LPS-binding and inhibits the non-canonical inflammasome in macrophages. Functionally, inflammatory caspase that acts as the effector of the non-canonical inflammasome by mediating lipopolysaccharide (LPS)-induced pyroptosis. Also indirectly activates the NLRP3 and NLRP6 inflammasomes. Acts as a thiol protease that cleaves a tetrapeptide after an Asp residue at position P1: catalyzes cleavage of CGAS and GSDMD. In contrast to its human ortholog, does not cleave IL18. Effector of the non-canonical inflammasome independently of NLRP3 inflammasome and CASP1: the non-canonical inflammasome promotes pyroptosis through GSDMD cleavage without involving secretion of cytokine IL1B and IL18. In the non-canonical inflammasome, CASP4/CASP11 is activated by direct binding to the lipid A moiety of LPS without the need of an upstream sensor. LPS-binding promotes CASP4/CASP11 activation and CASP4/CASP11-mediated cleavage of GSDMD, followed by pyroptosis of infected cells and their extrusion into the gut lumen. Also indirectly promotes secretion of mature cytokines (IL1A, IL18 and HMGB1) downstream of GSDMD-mediated pyroptosis via activation of the NLRP3 and NLRP6 inflammasomes. Involved in NLRP3-dependent CASP1 activation and IL1B and IL18 secretion in response to non-canonical activators, such as UVB radiation or cholera enterotoxin. Involved in NLRP6 inflammasome-dependent activation in response to lipoteichoic acid (LTA), a cell-wall component of Gram-positive bacteria, which leads to CASP1 activation and IL1B and IL18 secretion. Involved in LPS-induced IL6 secretion; this activity may not require caspase enzymatic activity. The non-canonical inflammasome is required for innate immunity to cytosolic, but not vacuolar, bacteria. Plays a crucial role in the restriction of S.typhimurium replication in colonic epithelial cells during infection. Activation of the non-canonical inflammasome in brain endothelial cells can lead to excessive pyroptosis, leading to blood-brain barrier breakdown. Pyroptosis limits bacterial replication, while cytokine secretion promotes the recruitment and activation of immune cells and triggers mucosal inflammation. May also act as an activator of adaptive immunity in dendritic cells, following activation by oxidized phospholipid 1-palmitoyl-2-arachidonoyl- sn-glycero-3-phosphorylcholine, an oxidized phospholipid (oxPAPC). Cleavage of GSDMD is not strictly dependent on the consensus cleavage site but depends on an exosite interface on CASP4/CASP11 that recognizes and binds the Gasdermin-D, C-terminal (GSDMD-CT) part. In contrast, it does not directly process IL1B. During non-canonical inflammasome activation, cuts CGAS and may play a role in the regulation of antiviral innate immune activation. This is Caspase-4 from Mus musculus (Mouse).